Here is a 222-residue protein sequence, read N- to C-terminus: Ribosomal RNA small subunit methyltransferase G (222 aa).

Residues Gly-80, Leu-85, 131–132 (VE), and Arg-148 contribute to the S-adenosyl-L-methionine site.

This sequence belongs to the methyltransferase superfamily. RNA methyltransferase RsmG family.

The protein localises to the cytoplasm. It catalyses the reaction guanosine(527) in 16S rRNA + S-adenosyl-L-methionine = N(7)-methylguanosine(527) in 16S rRNA + S-adenosyl-L-homocysteine. Functionally, specifically methylates the N7 position of guanine in position 527 of 16S rRNA. This Polynucleobacter asymbioticus (strain DSM 18221 / CIP 109841 / QLW-P1DMWA-1) (Polynucleobacter necessarius subsp. asymbioticus) protein is Ribosomal RNA small subunit methyltransferase G.